The sequence spans 220 residues: Vesicle-associated membrane protein 7 (220 aa).

Residues 2–188 (AILFAVVARG…ARAMCMKNLK (187 aa)) lie on the Cytoplasmic side of the membrane. The Longin domain maps to 7–110 (VVARGTTILA…AMNSEFSSVL (104 aa)). In terms of domain architecture, v-SNARE coiled-coil homology spans 125–185 (QVAETQAQVD…RNLARAMCMK (61 aa)). Residues 189 to 209 (LTIIIIIVSIVIIYIIVSAAC) traverse the membrane as a helical; Anchor for type IV membrane protein segment. Residues 210 to 220 (GGLAWPSCVQK) are Vesicular-facing.

This sequence belongs to the synaptobrevin family.

Its subcellular location is the cytoplasmic vesicle. It localises to the secretory vesicle membrane. It is found in the golgi apparatus. The protein localises to the trans-Golgi network membrane. The protein resides in the late endosome membrane. Its subcellular location is the lysosome membrane. It localises to the endoplasmic reticulum membrane. It is found in the phagosome membrane. The protein localises to the synapse. The protein resides in the synaptosome. Its function is as follows. Involved in the targeting and/or fusion of transport vesicles to their target membrane during transport of proteins from the early endosome to the lysosome. Required for heterotypic fusion of late endosomes with lysosomes and homotypic lysosomal fusion. Required for calcium regulated lysosomal exocytosis. Involved in the export of chylomicrons from the endoplasmic reticulum to the cis Golgi. Required for focal exocytosis of late endocytic vesicles during phagosome formation. This Gallus gallus (Chicken) protein is Vesicle-associated membrane protein 7.